The following is a 165-amino-acid chain: Cytochrome c-type biogenesis protein CcmE (165 aa).

Residues 1–7 (MTRKQKR) lie on the Cytoplasmic side of the membrane. A helical; Signal-anchor for type II membrane protein membrane pass occupies residues 8–28 (LAIIGGGMSFIVAAVLLVMFA). The Periplasmic portion of the chain corresponds to 29–165 (FGQSIAYFYM…ASGDKTGATK (137 aa)). Residues H123 and Y127 each coordinate heme. The interval 138–165 (DKGLWQQGAEGAAPAASAASGDKTGATK) is disordered. Residues 145 to 158 (GAEGAAPAASAASG) show a composition bias toward low complexity.

Belongs to the CcmE/CycJ family.

The protein resides in the cell inner membrane. In terms of biological role, heme chaperone required for the biogenesis of c-type cytochromes. Transiently binds heme delivered by CcmC and transfers the heme to apo-cytochromes in a process facilitated by CcmF and CcmH. In Agrobacterium fabrum (strain C58 / ATCC 33970) (Agrobacterium tumefaciens (strain C58)), this protein is Cytochrome c-type biogenesis protein CcmE.